Reading from the N-terminus, the 443-residue chain is Fatty acid desaturase 3 (443 aa).

Topologically, residues 1 to 130 (MGGVGEPDWE…EDMKLFEAKP (130 aa)) are cytoplasmic. Residues 18–95 (LPTLRWEQVR…LQPLLIGELA (78 aa)) enclose the Cytochrome b5 heme-binding domain. Residues 131–151 (AFFGLLLGHILAMEVLAWLMI) traverse the membrane as a helical segment. Position 152 (tyrosine 152) is a topological domain, lumenal. The helical transmembrane segment at 153–173 (MLGPGWVPSTLAALILAISQA) threads the bilayer. The Cytoplasmic segment spans residues 174–259 (QSWCLQHDLG…KKKRRYLPYN (86 aa)). The Histidine box-1 signature appears at 180-184 (HDLGH). The Histidine box-2 motif lies at 217-221 (HFQHH). The chain crosses the membrane as a helical span at residues 260–280 (HQHLYFFLIGPPLLTLVNFEV). The Lumenal segment spans residues 281–282 (EN). Residues 283–303 (LAYMLVCMQWMDLLWAASFYA) form a helical membrane-spanning segment. A topological domain (cytoplasmic) is located at residue arginine 304. The chain crosses the membrane as a helical span at residues 305-325 (FLLSYIPFYGIPGALLLFVAV). Over 326 to 443 (RVLESHWFVW…NVWLEAYLHQ (118 aa)) the chain is Lumenal. A Histidine box-3 motif is present at residues 381–385 (QIEHH).

The protein belongs to the fatty acid desaturase type 1 family.

It is found in the endoplasmic reticulum membrane. The enzyme catalyses an N-acylsphing-4-enine + 2 Fe(II)-[cytochrome b5] + O2 + 2 H(+) = an N-acyl-sphinga-4E,14Z-dienine + 2 Fe(III)-[cytochrome b5] + 2 H2O. The catalysed reaction is N-(hexanoyl)sphing-4-enine + 2 Fe(II)-[cytochrome b5] + O2 + 2 H(+) = N-hexanoyl-sphinga-4E,14Z-dienine + 2 Fe(III)-[cytochrome b5] + 2 H2O. It carries out the reaction sphing-4-enine + 2 Fe(II)-[cytochrome b5] + O2 + 2 H(+) = sphinga-4E,14Z-dienine + 2 Fe(III)-[cytochrome b5] + 2 H2O. It catalyses the reaction (11E)-octadecenoyl-CoA + 2 Fe(II)-[cytochrome b5] + O2 + 2 H(+) = (11E,13Z)-octadecadienoyl-CoA + 2 Fe(III)-[cytochrome b5] + 2 H2O. The enzyme catalyses N-acyl-1-deoxysphinganine + 2 Fe(II)-[cytochrome b5] + O2 + 2 H(+) = N-acyl-1-deoxysphing-14Z-enine + 2 Fe(III)-[cytochrome b5] + 2 H2O. The catalysed reaction is an N-acylsphinganine + 2 Fe(II)-[cytochrome b5] + O2 + 2 H(+) = an N-acylsphing-14Z-enine + 2 Fe(III)-[cytochrome b5] + 2 H2O. The protein operates within lipid metabolism; polyunsaturated fatty acid biosynthesis. It functions in the pathway lipid metabolism; sphingolipid metabolism. Its function is as follows. Mammals have different sphingoid bases that differ in their length and/or pattern of desaturation and hydroxyl groups. The predominant sphingoid base that comprises mammalian ceramides is sphing-4-enine (sphingosine or SPH) which has a trans (E) desaturation at carbon 4. FADS3 is a desaturase that introduces a cis (Z) double bond between carbon 14 and carbon 15 of the sphingoid base (also known as long chain base, LCB), producing LCBs such as sphinga-4,14-dienine (SPD, d18:2(4E,14Z)) from SPH. Prefers SPH-containing ceramides (N-acylsphing-4-enines) as substrates. Capable of metabolizing also the SPH in its free form. SPD ceramides occur widely in mammalian tissues and cells. Due to their unusual structure containing a cis double bond, SPD ceramides may have an opposite, negative role in lipid microdomain formation relative to conventional ceramides. Could be involved in the detoxification of 1-deoxy sphingolipids, by desaturating the cytotoxic 1-deoxysphinganine (1-deoxySA, m18:0), produced under pathological conditions, to 1-deoxysphingenine (1-deoxysphingosine, 1-deoxySO, m18:1). Although prefers SPH-containing ceramides (N-acylsphing-4-enines) as substrates, it also exhibits activity toward dihydrosphingosine-containing CERs (N-acylsphinganines) and produces 14Z-SPH-containing sphingolipids. Its desaturase mechanism involves an electron transfer facilitated by cytochrome b5. FADS3 also acts as a methyl-end fatty acyl coenzyme A (CoA) desaturase that introduces a cis double bond between the preexisting double bond and the terminal methyl group of the fatty acyl chain. Desaturates (11E)-octadecenoate (trans-vaccenoate, the predominant trans fatty acid in human milk) at carbon 13 to generate (11E,13Z)-octadecadienoate (also known as conjugated linoleic acid 11E,13Z-CLA). This is Fatty acid desaturase 3 from Bos taurus (Bovine).